Consider the following 401-residue polypeptide: MPPSVRYFFIVSVTTVIVFIVLYVLSFGGDQSYQKLNISDSVMLAQVCSSFIDGKSRFLWRNKLMIHEKPSCTEYVTQSHYITAPLSQEEVDFPLAYVMVIHHNFDTFARLFRAIFMPQNIYCVHVDEKATAEFKGAVEQLVSCFPNAFLASKMEPVVYGGISRLQADLNCIKDLSTSEVPWKYAINTCGQDFPLKTNKEIVQYLKGLKGKNLTPGVLPPAHAIGRTRYVHREHLSKELSYVIRTTALKPPPPHNLTIYFGSAYVALSREFANFVLRDPRAVDLLHWSKDTFSPDEHFWVTLNRIPGVPGSMPPNASWTGNLRAVKWMDMEAKHGGCHGHYVHGICIYGNGDLQWLINSQSLFANKFELNTYPLTVECLELRLRERTLNQSEIAIQPSWYF.

Over 1–7 (MPPSVRY) the chain is Cytoplasmic. A helical; Signal-anchor for type II membrane protein membrane pass occupies residues 8–28 (FFIVSVTTVIVFIVLYVLSFG). The Lumenal segment spans residues 29–401 (GDQSYQKLNI…EIAIQPSWYF (373 aa)). 4 N-linked (GlcNAc...) asparagine glycosylation sites follow: Asn37, Asn255, Asn315, and Asn389.

The protein belongs to the glycosyltransferase 14 family.

The protein resides in the golgi apparatus membrane. The catalysed reaction is a beta-D-Gal-(1-&gt;4)-beta-D-GlcNAc-(1-&gt;3)-beta-D-Gal-(1-&gt;4)-beta-D-GlcNAc derivative + UDP-N-acetyl-alpha-D-glucosamine = a beta-D-Gal-(1-&gt;4)-beta-D-GlcNAc-(1-&gt;3)-[beta-D-GlcNAc-(1-&gt;6)]-beta-D-Gal-(1-&gt;4)-N-acetyl-beta-D-glucosaminyl derivative + UDP + H(+). It participates in protein modification; protein glycosylation. Functionally, branching enzyme that converts linear into branched poly-N-acetyllactosaminoglycans. Introduces the blood group I antigen during embryonic development. It is closely associated with the development and maturation of erythroid cells. The chain is N-acetyllactosaminide beta-1,6-N-acetylglucosaminyl-transferase (Gcnt2) from Mus musculus (Mouse).